The sequence spans 254 residues: L-erythrulose-1-phosphate isomerase (254 aa).

The active-site Electrophile is the His-97. The active-site Proton acceptor is Glu-170. Residues Gly-176 and Ser-213 each contribute to the substrate site.

The protein belongs to the triosephosphate isomerase family. As to quaternary structure, homodimer.

Its subcellular location is the cytoplasm. It catalyses the reaction L-erythrulose 1-phosphate = D-erythrulose 4-phosphate. The protein operates within carbohydrate metabolism; erythritol degradation. Functionally, catalyzes the isomerization of D-erythrulose-4P to L-erythrulose-1P. This chain is L-erythrulose-1-phosphate isomerase, found in Mesorhizobium japonicum (strain LMG 29417 / CECT 9101 / MAFF 303099) (Mesorhizobium loti (strain MAFF 303099)).